A 1100-amino-acid chain; its full sequence is Sorbin and SH3 domain-containing protein 2 (1100 aa).

Residues Tyr13, Ser14, His27, Gly28, Ser30, and Ser43 each carry the phosphoserine modification. Residues 30–52 (SLDSTDTYPQHAQSLDGTTSSSI) are compositionally biased toward polar residues. Residues 30-57 (SLDSTDTYPQHAQSLDGTTSSSIPLYRS) form a disordered region. One can recognise a SoHo domain in the interval 66–127 (VIKAPHYPGI…YNTPYTYNAG (62 aa)). Over residues 134–147 (SAQSHPAAKTQTYR) the composition is skewed to polar residues. Residues 134-311 (SAQSHPAAKT…SPSRAKGGDD (178 aa)) form a disordered region. Position 153 is an alanine amide (His153). 2 positions are modified to phosphoserine: Ser154 and Ser157. Positions 167–180 (PVPPPHVPPPVPPL) are enriched in pro residues. The span at 181 to 217 (RPRDRSSTEKHDWDPPDRKVDTRKFRSEPRSIFEYEP) shows a compositional bias: basic and acidic residues. Phosphothreonine is present on residues Ser234 and Ile236. Ser239, Ser245, Ser248, Lys258, Ser259, and Glu260 each carry phosphoserine. Residues Thr277, Gly280, and Val282 each carry the phosphothreonine modification. Ser287 is modified (phosphoserine). Low complexity predominate over residues 287 to 304 (SSTTLTKSFTSSSPSSPS). Position 292 is a phosphothreonine (Thr292). Phosphoserine is present on residues Phe295, Ser297, Ser298, Ser299, Ser301, Ser302, Ser304, Ala306, Asp311, and Pro316. 3 positions are modified to phosphothreonine: Ser320, Ser322, and Gly326. 3 positions are modified to phosphoserine: His341, Val344, and Arg346. A Phosphothreonine modification is found at Glu366. Residues Ser381 and Ser383 each carry the phosphoserine modification. Phosphothreonine occurs at positions 413 and 415. Phosphoserine is present on residues Arg437 and Arg439. Ile459 is subject to Phosphothreonine. A phosphoserine mark is found at Lys474, Ser494, Ser497, Ser550, and Ser750. The tract at residues 807-866 (RMPRSASFQDVDTANSSCHHQDRGGALQDRESPRSYSSTLTDMGRSAPRERRGTPEKEKL) is disordered. A compositionally biased stretch (polar residues) spans 812–824 (ASFQDVDTANSSC). Over residues 825–839 (HHQDRGGALQDRESP) the composition is skewed to basic and acidic residues. Ser843 is subject to Phosphoserine. Positions 853–866 (APRERRGTPEKEKL) are enriched in basic and acidic residues. SH3 domains lie at 863–922 (KEKL…KLTP) and 938–999 (GEIG…VVKK). A phosphoserine mark is found at Ser1017 and Ser1023. An SH3 3 domain is found at 1041–1100 (GGGEPFQALYNYTPRNEDELELRESDVIDVMEKCDDGWFVGTSRRTKFFGTFPGNYVKRL).

In terms of assembly, interacts with ABL, CBL, DNM1, DNM2, FLOT1, AFDN, PTK2B/PYK2, SAPAP, SPTAN1, SYNJ1, SYNJ2, VCL/vinculin and WASF. Interacts with ABL1/c-Abl, ABL2/v-Abl/Arg, ACTN, CBL and PALLD. Interacts with PTPN12 and WASF1 via its SH3 domains; this interaction may mediate the partial PTPN12 and WASF1 translocation to focal adhesion sites. In terms of processing, ubiquitinated by CBL. Dephosphorylated by PTPN12. In terms of tissue distribution, abundantly expressed in heart. In cardiac muscle cells, located in the Z-disks of sarcomere. Also found, but to a lower extent, in small and large intestine, pancreas, thymus, colon, spleen, prostate, testis, brain, ovary and epithelial cells. In the pancreas, mainly expressed in acinar cells, duct cells and all cell types in islets (at protein level). Tends to be down-regulated in pancreatic adenocarcinomas ans metastases.

It localises to the cytoplasm. It is found in the perinuclear region. The protein localises to the apical cell membrane. Its subcellular location is the cell junction. The protein resides in the focal adhesion. It localises to the cell projection. It is found in the lamellipodium. In terms of biological role, adapter protein that plays a role in the assembling of signaling complexes, being a link between ABL kinases and actin cytoskeleton. Can form complex with ABL1 and CBL, thus promoting ubiquitination and degradation of ABL1. May play a role in the regulation of pancreatic cell adhesion, possibly by acting on WASF1 phosphorylation, enhancing phosphorylation by ABL1, as well as dephosphorylation by PTPN12. Isoform 6 increases water and sodium absorption in the intestine and gall-bladder. This Homo sapiens (Human) protein is Sorbin and SH3 domain-containing protein 2 (SORBS2).